A 337-amino-acid polypeptide reads, in one-letter code: DNA-directed RNA polymerase subunit alpha (337 aa).

The alpha N-terminal domain (alpha-NTD) stretch occupies residues 1-233 (MVREDVVGST…DLLIPFLHAE (233 aa)). The interval 265 to 337 (KGIPLTCIFI…FAINLLNKKL (73 aa)) is alpha C-terminal domain (alpha-CTD).

It belongs to the RNA polymerase alpha chain family. As to quaternary structure, in plastids the minimal PEP RNA polymerase catalytic core is composed of four subunits: alpha, beta, beta', and beta''. When a (nuclear-encoded) sigma factor is associated with the core the holoenzyme is formed, which can initiate transcription.

The protein localises to the plastid. It localises to the chloroplast. The enzyme catalyses RNA(n) + a ribonucleoside 5'-triphosphate = RNA(n+1) + diphosphate. Its function is as follows. DNA-dependent RNA polymerase catalyzes the transcription of DNA into RNA using the four ribonucleoside triphosphates as substrates. The sequence is that of DNA-directed RNA polymerase subunit alpha from Phalaenopsis aphrodite subsp. formosana (Moth orchid).